The following is a 132-amino-acid chain: uncharacterized protein (132 aa).

WD repeat units lie at residues 14 to 53 (DLQD…LEIL) and 58 to 97 (AHDD…LANV).

This is an uncharacterized protein from Acanthamoeba polyphaga (Amoeba).